The sequence spans 1097 residues: DNA-directed RNA polymerase subunit beta (1097 aa).

The segment at 1072–1097 (QDVNPRRSTPSRPTYESLGVADYDED) is disordered.

The protein belongs to the RNA polymerase beta chain family. In cyanobacteria the RNAP catalytic core is composed of 2 alpha, 1 beta, 1 beta', 1 gamma and 1 omega subunit. When a sigma factor is associated with the core the holoenzyme is formed, which can initiate transcription.

It catalyses the reaction RNA(n) + a ribonucleoside 5'-triphosphate = RNA(n+1) + diphosphate. Its function is as follows. DNA-dependent RNA polymerase catalyzes the transcription of DNA into RNA using the four ribonucleoside triphosphates as substrates. This chain is DNA-directed RNA polymerase subunit beta, found in Parasynechococcus marenigrum (strain WH8102).